The primary structure comprises 291 residues: MSCQAFTSADTFIPLNSDASATLPLIMHHSAAECLPVSNHATNVMSTATGLHYSVPSCHYGNQPSTYGVMAGSLTLVFYKFPDHTLSHGFPPIHQPLLAEDPTAADFKQELRRKSKLVEEPIDMDSPEIRELEKFANEFKVRRIKLGYTQTNVGEALAAVHGSEFSQTTICRFENLQLSFKNACKLKAILSKWLEEAEQVGALYNEKVGANERKRKRRTTISIAAKDALERHFGEQNKPSSQEIMRMAEELNLEKEVVRVWFCNRRQREKRVKTSLNQSLFSISKEHLECR.

The 9aaTAD signature appears at 5–13 (AFTSADTFI). The region spanning 124 to 198 (MDSPEIRELE…ILSKWLEEAE (75 aa)) is the POU-specific domain. A DNA-binding region (homeobox) is located at residues 214-273 (KRKRRTTISIAAKDALERHFGEQNKPSSQEIMRMAEELNLEKEVVRVWFCNRRQREKRVK).

This sequence belongs to the POU transcription factor family. Class-1 subfamily. In terms of assembly, interacts with PITX1. Interacts with LHX3. Interacts with ELK1.

The protein localises to the nucleus. Transcription factor involved in the specification of the lactotrope, somatotrope, and thyrotrope phenotypes in the developing anterior pituitary. Activates growth hormone and prolactin genes. Specifically binds to the consensus sequence 5'-TAAAT-3'. This chain is Pituitary-specific positive transcription factor 1 (POU1F1), found in Macaca mulatta (Rhesus macaque).